We begin with the raw amino-acid sequence, 237 residues long: Uridylate kinase (237 aa).

Residue lysine 10–glycine 13 coordinates ATP. Position 51 (glycine 51) interacts with UMP. The ATP site is built by glycine 52 and arginine 56. Residues aspartate 71 and methionine 132–threonine 139 each bind UMP. ATP is bound by residues asparagine 160, tyrosine 166, and aspartate 169.

This sequence belongs to the UMP kinase family. Homohexamer.

The protein localises to the cytoplasm. It catalyses the reaction UMP + ATP = UDP + ADP. It functions in the pathway pyrimidine metabolism; CTP biosynthesis via de novo pathway; UDP from UMP (UMPK route): step 1/1. Its activity is regulated as follows. Inhibited by UTP. In terms of biological role, catalyzes the reversible phosphorylation of UMP to UDP. This chain is Uridylate kinase, found in Nocardioides sp. (strain ATCC BAA-499 / JS614).